Reading from the N-terminus, the 146-residue chain is Tyrosinase cofactor (146 aa).

The tat-type signal signal peptide spans 1-30; that stretch reads MPELTRRRALGAAAVVAAGVPLVALPAARA. The interval 65 to 85 is disordered; that stretch reads RTVTDGGGHHGGGHGGDGHGG. The segment covering 69–85 has biased composition (gly residues); the sequence is DGGGHHGGGHGGDGHGG.

Belongs to the melC1 family. In terms of processing, predicted to be exported by the Tat system. The position of the signal peptide cleavage has not been experimentally proven.

Functionally, this protein may function to deliver copper to tyrosinase. This is Tyrosinase cofactor (melC1) from Streptomyces antibioticus.